The chain runs to 632 residues: MAU2 chromatid cohesion factor homolog (632 aa).

TPR repeat units follow at residues Gly453 to Glu486 and Ser493 to Ile526.

It belongs to the SCC4/mau-2 family. As to quaternary structure, interacts with Nipped-B to form the cohesin loading complex.

It localises to the nucleus. The protein localises to the nucleoplasm. Required for association of the cohesin complex with chromatin during interphase. Plays a role in sister chromatid cohesion and normal progression through prometaphase. The polypeptide is MAU2 chromatid cohesion factor homolog (Drosophila erecta (Fruit fly)).